A 379-amino-acid polypeptide reads, in one-letter code: MTGEEVKEPKEQQEITEVKEQEPEISYNAIVLNGVGGYDKVKVEVKKGVPTLKSDEILVRVQACGLNFSDLLVRQGAFGKHHSLGTECAGVVEAIGDLVIDRKVGDKIIMLNIDGGLWTELVVTTVNRTFLMPDGMSFQEAAAISVNYTAAYVMIYDFANLRPSQSILIHMAAGGVGIAATQLCKLVHDVTIFGTASPSKHETIKENGVTYPIDYTTLDYAEEVRKIAPKGVDIVLDPLGGADDSKGFGLLKPLGKLVLYGSANQVTAPKRSSLAAAKVWWHKFNIDALQLINSNKAVCGFHLGRTDPDHVAEVIRKLISLYKEGKIKPKVDSVWSFEQVGDAMRHMRNTRTLEKSSWSLKSRQLMPQLEIKSVSKRQG.

Serine 273 is modified (phosphoserine).

This sequence belongs to the zinc-containing alcohol dehydrogenase family. Quinone oxidoreductase subfamily. As to expression, cholinergic synaptic vesicles.

The protein resides in the cytoplasmic vesicle. It localises to the secretory vesicle. Its subcellular location is the synaptic vesicle membrane. May play a central role in the functions mediated by specific classes of synaptic vesicles. The polypeptide is Synaptic vesicle membrane protein VAT-1 (Tetronarce californica (Pacific electric ray)).